A 154-amino-acid chain; its full sequence is ATP synthase subunit b (154 aa).

Residues 5–27 (LLGQAIAFTLFVWFCMKYVWPPI) traverse the membrane as a helical segment.

This sequence belongs to the ATPase B chain family. As to quaternary structure, F-type ATPases have 2 components, F(1) - the catalytic core - and F(0) - the membrane proton channel. F(1) has five subunits: alpha(3), beta(3), gamma(1), delta(1), epsilon(1). F(0) has three main subunits: a(1), b(2) and c(10-14). The alpha and beta chains form an alternating ring which encloses part of the gamma chain. F(1) is attached to F(0) by a central stalk formed by the gamma and epsilon chains, while a peripheral stalk is formed by the delta and b chains.

The protein resides in the cell inner membrane. Its function is as follows. F(1)F(0) ATP synthase produces ATP from ADP in the presence of a proton or sodium gradient. F-type ATPases consist of two structural domains, F(1) containing the extramembraneous catalytic core and F(0) containing the membrane proton channel, linked together by a central stalk and a peripheral stalk. During catalysis, ATP synthesis in the catalytic domain of F(1) is coupled via a rotary mechanism of the central stalk subunits to proton translocation. Functionally, component of the F(0) channel, it forms part of the peripheral stalk, linking F(1) to F(0). This chain is ATP synthase subunit b, found in Aliivibrio fischeri (strain ATCC 700601 / ES114) (Vibrio fischeri).